Reading from the N-terminus, the 430-residue chain is Adenylosuccinate synthetase (430 aa).

GTP is bound by residues 12–18 (GDEGKGK) and 40–42 (GHT). The active-site Proton acceptor is the Asp-13. Mg(2+) contacts are provided by Asp-13 and Gly-40. Residues 13 to 16 (DEGK), 38 to 41 (NAGH), Thr-128, Arg-142, Gln-223, Thr-238, and Arg-302 contribute to the IMP site. His-41 serves as the catalytic Proton donor. 298–304 (TTTGRPR) is a binding site for substrate. Residues Arg-304, 330-332 (SID), and 413-415 (SVG) each bind GTP.

This sequence belongs to the adenylosuccinate synthetase family. In terms of assembly, homodimer. The cofactor is Mg(2+).

The protein localises to the cytoplasm. It carries out the reaction IMP + L-aspartate + GTP = N(6)-(1,2-dicarboxyethyl)-AMP + GDP + phosphate + 2 H(+). The protein operates within purine metabolism; AMP biosynthesis via de novo pathway; AMP from IMP: step 1/2. Functionally, plays an important role in the de novo pathway of purine nucleotide biosynthesis. Catalyzes the first committed step in the biosynthesis of AMP from IMP. This Lactococcus lactis subsp. cremoris (strain MG1363) protein is Adenylosuccinate synthetase.